Consider the following 393-residue polypeptide: Formate-dependent phosphoribosylglycinamide formyltransferase (393 aa).

N(1)-(5-phospho-beta-D-ribosyl)glycinamide contacts are provided by residues 22 to 23 (EL) and glutamate 82. Residues arginine 114, lysine 155, 160–165 (SSGKGQ), 195–198 (EGFI), and glutamate 203 contribute to the ATP site. Residues 119 to 308 (RLAAEELDLP…QFALHARAIL (190 aa)) form the ATP-grasp domain. Positions 267 and 279 each coordinate Mg(2+). Residues aspartate 286, lysine 356, and 363-364 (RR) each bind N(1)-(5-phospho-beta-D-ribosyl)glycinamide.

The protein belongs to the PurK/PurT family. Homodimer.

It catalyses the reaction N(1)-(5-phospho-beta-D-ribosyl)glycinamide + formate + ATP = N(2)-formyl-N(1)-(5-phospho-beta-D-ribosyl)glycinamide + ADP + phosphate + H(+). The protein operates within purine metabolism; IMP biosynthesis via de novo pathway; N(2)-formyl-N(1)-(5-phospho-D-ribosyl)glycinamide from N(1)-(5-phospho-D-ribosyl)glycinamide (formate route): step 1/1. In terms of biological role, involved in the de novo purine biosynthesis. Catalyzes the transfer of formate to 5-phospho-ribosyl-glycinamide (GAR), producing 5-phospho-ribosyl-N-formylglycinamide (FGAR). Formate is provided by PurU via hydrolysis of 10-formyl-tetrahydrofolate. The sequence is that of Formate-dependent phosphoribosylglycinamide formyltransferase from Pseudomonas putida (strain GB-1).